We begin with the raw amino-acid sequence, 344 residues long: L-rhamnose-proton symporter (344 aa).

The next 10 membrane-spanning stretches (helical) occupy residues 4–24 (PILL…CFYA), 38–58 (WSLG…WWLL), 68–88 (FDMA…IGNI), 101–121 (MGIG…TPVL), 137–157 (TLLG…AGLL), 175–195 (LILA…MDAA), 207–227 (INAL…GAVV), 255–275 (LIAN…QFFF), 290–310 (ISWM…GLLF), and 324–344 (LVLG…GMAA).

Belongs to the L-rhamnose transporter (TC 2.A.7.6) family.

The protein resides in the cell inner membrane. The enzyme catalyses L-rhamnopyranose(in) + H(+)(in) = L-rhamnopyranose(out) + H(+)(out). Functionally, uptake of L-rhamnose across the cytoplasmic membrane with the concomitant transport of protons into the cell (symport system). The protein is L-rhamnose-proton symporter of Pectobacterium carotovorum subsp. carotovorum (strain PC1).